The following is a 93-amino-acid chain: Small ribosomal subunit protein bS20 (93 aa).

Residues Met-1 to Val-11 are compositionally biased toward basic and acidic residues. The segment at Met-1–Val-23 is disordered. Residues Arg-12 to Val-23 are compositionally biased toward basic residues.

Belongs to the bacterial ribosomal protein bS20 family.

Its function is as follows. Binds directly to 16S ribosomal RNA. This is Small ribosomal subunit protein bS20 from Chloroherpeton thalassium (strain ATCC 35110 / GB-78).